The sequence spans 480 residues: 3-isopropylmalate dehydratase large subunit (480 aa).

Residues C360, C418, and C421 each coordinate [4Fe-4S] cluster.

Belongs to the aconitase/IPM isomerase family. LeuC type 1 subfamily. Heterodimer of LeuC and LeuD. [4Fe-4S] cluster is required as a cofactor.

The catalysed reaction is (2R,3S)-3-isopropylmalate = (2S)-2-isopropylmalate. It participates in amino-acid biosynthesis; L-leucine biosynthesis; L-leucine from 3-methyl-2-oxobutanoate: step 2/4. In terms of biological role, catalyzes the isomerization between 2-isopropylmalate and 3-isopropylmalate, via the formation of 2-isopropylmaleate. In Anaeromyxobacter dehalogenans (strain 2CP-1 / ATCC BAA-258), this protein is 3-isopropylmalate dehydratase large subunit.